A 454-amino-acid polypeptide reads, in one-letter code: GTPase Obg (454 aa).

Residues 2–159 (SDFVDEAVLH…VDIRLELKTI (158 aa)) enclose the Obg domain. The tract at residues 60–87 (YQRRPHRKAENGAPGQGSNRSGASGADL) is disordered. The 176-residue stretch at 160–335 (ADVGLVGFPS…LAYALGEQVA (176 aa)) folds into the OBG-type G domain. GTP-binding positions include 166 to 173 (GFPSAGKS), 191 to 195 (FTTLV), 212 to 215 (DVPG), 287 to 290 (NKID), and 316 to 318 (SAA). Residues serine 173 and threonine 193 each coordinate Mg(2+). Positions 353-435 (PREIGEIPFQ…DNPVVFDWDP (83 aa)) constitute an OCT domain.

It belongs to the TRAFAC class OBG-HflX-like GTPase superfamily. OBG GTPase family. As to quaternary structure, monomer. Mg(2+) is required as a cofactor.

It localises to the cytoplasm. An essential GTPase which binds GTP, GDP and possibly (p)ppGpp with moderate affinity, with high nucleotide exchange rates and a fairly low GTP hydrolysis rate. Plays a role in control of the cell cycle, stress response, ribosome biogenesis and in those bacteria that undergo differentiation, in morphogenesis control. The protein is GTPase Obg of Thermobifida fusca (strain YX).